Here is a 347-residue protein sequence, read N- to C-terminus: Dihydroorotase (347 aa).

Zn(2+) contacts are provided by His-17 and His-19. Substrate is bound by residues 19–21 and Asn-45; that span reads HLR. The Zn(2+) site is built by Lys-103, His-140, and His-178. Lys-103 carries the N6-carboxylysine modification. His-140 is a binding site for substrate. Position 223 (Leu-223) interacts with substrate. Asp-251 contributes to the Zn(2+) binding site. Residue Asp-251 is part of the active site. Substrate contacts are provided by His-255 and Ala-267.

This sequence belongs to the metallo-dependent hydrolases superfamily. DHOase family. Class II DHOase subfamily. As to quaternary structure, homodimer. Zn(2+) is required as a cofactor.

The enzyme catalyses (S)-dihydroorotate + H2O = N-carbamoyl-L-aspartate + H(+). The protein operates within pyrimidine metabolism; UMP biosynthesis via de novo pathway; (S)-dihydroorotate from bicarbonate: step 3/3. Catalyzes the reversible cyclization of carbamoyl aspartate to dihydroorotate. The polypeptide is Dihydroorotase (Pectobacterium atrosepticum (strain SCRI 1043 / ATCC BAA-672) (Erwinia carotovora subsp. atroseptica)).